The sequence spans 256 residues: Protein YIPF5 (256 aa).

The Cytoplasmic segment spans residues 1–125 (MSNFDNFNTD…ADGNIMNETD (125 aa)). The helical transmembrane segment at 126 to 146 (LAGPMVFCLAFGATLLLAGKI) threads the bilayer. Position 147 (glutamine 147) is a topological domain, lumenal. Residues 148–168 (FGYVYGISAIGCLGMYCLLNL) form a helical membrane-spanning segment. The Cytoplasmic portion of the chain corresponds to 169-172 (MSMT). Residues 173-193 (GVSFGCVSSVLGYCLLPMIIL) traverse the membrane as a helical segment. The Lumenal portion of the chain corresponds to 194 to 195 (SS). The helical transmembrane segment at 196–216 (FAVIFSLQGILGIVLAALIIG) threads the bilayer. Residues 217-235 (WCSFSASKIFISALAMDGQ) are Cytoplasmic-facing. The helical transmembrane segment at 236 to 256 (QVLVAYPCALLYGVFALISVF) threads the bilayer.

This sequence belongs to the YIP1 family.

It localises to the endoplasmic reticulum membrane. The protein resides in the golgi apparatus. Its subcellular location is the cis-Golgi network membrane. Its function is as follows. Plays a role in transport between endoplasmic reticulum and Golgi. In Xenopus tropicalis (Western clawed frog), this protein is Protein YIPF5 (yipf5).